The chain runs to 436 residues: GTPase Der (436 aa).

EngA-type G domains are found at residues 3–167 (NIVA…PIKP) and 177–352 (PRFA…ENRQ). Residues 9-16 (GRPNVGKS), 56-60 (DTGGY), 119-122 (NKVD), 183-190 (GRPNAGKS), 230-234 (DTAGI), and 295-298 (NKWD) contribute to the GTP site. One can recognise a KH-like domain in the interval 353 to 436 (QRISTSKFNE…VPIDIYIREK (84 aa)).

Belongs to the TRAFAC class TrmE-Era-EngA-EngB-Septin-like GTPase superfamily. EngA (Der) GTPase family. Associates with the 50S ribosomal subunit.

Its function is as follows. GTPase that plays an essential role in the late steps of ribosome biogenesis. In Flavobacterium psychrophilum (strain ATCC 49511 / DSM 21280 / CIP 103535 / JIP02/86), this protein is GTPase Der.